The chain runs to 170 residues: 3-hydroxydecanoyl-[acyl-carrier-protein] dehydratase (170 aa).

H71 is an active-site residue.

It belongs to the thioester dehydratase family. FabA subfamily. As to quaternary structure, homodimer.

It is found in the cytoplasm. It catalyses the reaction a (3R)-hydroxyacyl-[ACP] = a (2E)-enoyl-[ACP] + H2O. It carries out the reaction (3R)-hydroxydecanoyl-[ACP] = (2E)-decenoyl-[ACP] + H2O. The enzyme catalyses (2E)-decenoyl-[ACP] = (3Z)-decenoyl-[ACP]. Its pathway is lipid metabolism; fatty acid biosynthesis. In terms of biological role, necessary for the introduction of cis unsaturation into fatty acids. Catalyzes the dehydration of (3R)-3-hydroxydecanoyl-ACP to E-(2)-decenoyl-ACP and then its isomerization to Z-(3)-decenoyl-ACP. Can catalyze the dehydratase reaction for beta-hydroxyacyl-ACPs with saturated chain lengths up to 16:0, being most active on intermediate chain length. The protein is 3-hydroxydecanoyl-[acyl-carrier-protein] dehydratase of Chelativorans sp. (strain BNC1).